The chain runs to 246 residues: UDP-N-acetyl-D-mannosaminuronic acid transferase (246 aa).

This sequence belongs to the glycosyltransferase 26 family.

The enzyme catalyses UDP-N-acetyl-alpha-D-mannosaminouronate + N-acetyl-alpha-D-glucosaminyl-di-trans,octa-cis-undecaprenyl diphosphate = beta-D-ManNAcA-(1-&gt;4)-alpha-D-GlcNAc-di-trans,octa-cis-undecaprenyl diphosphate + UDP + H(+). It participates in bacterial outer membrane biogenesis; enterobacterial common antigen biosynthesis. Functionally, catalyzes the synthesis of Und-PP-GlcNAc-ManNAcA (Lipid II), the second lipid-linked intermediate involved in enterobacterial common antigen (ECA) synthesis. The polypeptide is UDP-N-acetyl-D-mannosaminuronic acid transferase (Escherichia coli (strain ATCC 8739 / DSM 1576 / NBRC 3972 / NCIMB 8545 / WDCM 00012 / Crooks)).